The chain runs to 768 residues: MENFSNSKRIKSEKLGIDLIRSRIEGYVKDLKLRHVDVDELVERIVSGWCEDMTRKETIDYCSETAASMITKHPEYGQISSRIIVSYIHEITMDSFVEKIKYIQKHRGMVSEEMYGIILEHGETIEGMINYENDFLFSYFGILTLMKSYLIKVGEEIIERPQDMFMRVALQIHKTDFEKVREVYNLLSGHYFTHATPTLYNSCLKNPQLASCFLITPREDSIEGVYHMINQAAIITKYSGGIGLNLHGIRSKGSSLRSTGGRSNGIIPLIQVLNATKRYINQGAERRPGSIAIFLEPWHMEIFDFLELRKNTGPEEFRARDIFTALWINDLFMERVKNNEEWSLFCPSQAVGLSDVWGEEFNALYCKYEKTISRTVVPAQKLWKAIIEAQIETGTPYMCYKDACNRLSNQQHLGTIKSSNLCAEIVEYSSGEETSVCNLASICLPMFVKDGWFDFEAFRRVVKILTVNLNRVIDFNYYPVEEARRSNMRNRPIGIGVQGLADLFAILRLAFESDGARSLNQDIFEAMYYSAMEASCELAEKEGPFPSYEGSPISKGIFHFELAGRKASGNWDWEGLRERIRRHGVRNSLLIALMPTAGTSQIFGNNEAFEPHASNIYTRRTHAGEFQIVNQHLVNDLVRLGLWSYEMKNLVIENEGSIQNITSIPHEIREIYKTAWEIKMKSVIDLAADRQVFVDQSQSLNIFIAKPTYSQLTSMHFYGYHCGLKTGMYYLRTRPITSAIKFTVDKKLAEKTLSSMNDTDDPCSMCSS.

Residues 7 to 8 and 13 to 19 contribute to the ATP site; these read SK and EKLGIDL. GDP is bound by residues Thr-196 and Ser-211. Cysteines 212 and 437 form a disulfide. Residues 220-222, Lys-237, and Arg-250 contribute to the dTTP site; that span reads DSI. Residue Asn-420 participates in GDP binding. The Proton acceptor role is filled by Asn-420. Residue Cys-422 is the Cysteine radical intermediate of the active site. A GDP-binding site is contributed by Glu-424. The active-site Proton acceptor is Glu-424.

It belongs to the ribonucleoside diphosphate reductase large chain family. In terms of assembly, heterodimer of a large and a small subunit.

It carries out the reaction a 2'-deoxyribonucleoside 5'-diphosphate + [thioredoxin]-disulfide + H2O = a ribonucleoside 5'-diphosphate + [thioredoxin]-dithiol. Under complex allosteric control mediated by deoxynucleoside triphosphates and ATP binding to separate specificity and activation sites on the large subunit. The type of nucleotide bound at the specificity site determines substrate preference. It seems probable that ATP makes the enzyme reduce CDP and UDP, dGTP favors ADP reduction and dTTP favors GDP reduction. Stimulated by ATP and inhibited by dATP binding to the activity site. Functionally, provides the precursors necessary for DNA synthesis. Catalyzes the biosynthesis of deoxyribonucleotides from the corresponding ribonucleotides. This Encephalitozoon cuniculi (strain GB-M1) (Microsporidian parasite) protein is Ribonucleoside-diphosphate reductase large chain.